The primary structure comprises 330 residues: DNA primase small subunit PriS (330 aa).

Catalysis depends on residues aspartate 101 and aspartate 103. Zn(2+) contacts are provided by cysteine 116, cysteine 119, cysteine 128, and aspartate 131. Aspartate 235 is an active-site residue.

This sequence belongs to the eukaryotic-type primase small subunit family. In terms of assembly, heterodimer of a small subunit (PriS) and a large subunit (PriL). It depends on Mg(2+) as a cofactor. The cofactor is Mn(2+).

In terms of biological role, catalytic subunit of DNA primase, an RNA polymerase that catalyzes the synthesis of short RNA molecules used as primers for DNA polymerase during DNA replication. The small subunit contains the primase catalytic core and has DNA synthesis activity on its own. Binding to the large subunit stabilizes and modulates the activity, increasing the rate of DNA synthesis while decreasing the length of the DNA fragments, and conferring RNA synthesis capability. The DNA polymerase activity may enable DNA primase to also catalyze primer extension after primer synthesis. May also play a role in DNA repair. This chain is DNA primase small subunit PriS, found in Saccharolobus islandicus (strain M.16.27) (Sulfolobus islandicus).